The primary structure comprises 328 residues: MSDVLSQEEINQLIEALMKGELKEEDLLKEEEEKKVKPYDFKRPSKFSKEQLRTFQMIHENFGRALSTYLSGRLRTFVDVEISIDQLTYEEFIRSVMIPSFIVIFTGDVFEGSAIFEMRLDLFYTMLDIIMGGPGENPPNRPPTEIETSIMRKEVTNMLTLLAQAWSDFQYFIPSIENVETNPQFVQIVPPNEIVLLVTASVSWGEFTSFINVCWPFSLLEPLLEKLSDRFWMMGRKPEKVEERMEELRKASQKIPVTVQAVIGETELRLKEILDLEVGDVIRLGTHYKDEIRIDVEGRPKFRGIPGVFKGKYAVKVTGEFTNGGEYE.

Positions 1 to 45 are interaction with unphosphorylated CheY; sequence MSDVLSQEEINQLIEALMKGELKEEDLLKEEEEKKVKPYDFKRPS.

It belongs to the FliM family. In terms of assembly, interacts (via N-terminus) with unphosphorylated CheY. Interacts (via central domain) with FliG (via central domain or via central domain and C-terminus).

Its subcellular location is the cell inner membrane. The protein localises to the bacterial flagellum basal body. Its function is as follows. FliM is one of three proteins (FliG, FliN, FliM) that forms the rotor-mounted switch complex (C ring), located at the base of the basal body. This complex interacts with the CheY and CheX chemotaxis proteins, in addition to contacting components of the motor that determine the direction of flagellar rotation. This chain is Flagellar motor switch protein FliM, found in Thermotoga maritima (strain ATCC 43589 / DSM 3109 / JCM 10099 / NBRC 100826 / MSB8).